We begin with the raw amino-acid sequence, 146 residues long: Prefoldin subunit alpha (146 aa).

The protein belongs to the prefoldin alpha subunit family. Heterohexamer of two alpha and four beta subunits.

The protein localises to the cytoplasm. Functionally, molecular chaperone capable of stabilizing a range of proteins. Seems to fulfill an ATP-independent, HSP70-like function in archaeal de novo protein folding. The sequence is that of Prefoldin subunit alpha from Methanococcus vannielii (strain ATCC 35089 / DSM 1224 / JCM 13029 / OCM 148 / SB).